The chain runs to 148 residues: Nucleoside diphosphate kinase (148 aa).

ATP is bound by residues Lys9, Phe57, Arg85, Thr91, Arg102, and Asn112. Residue Thr91 is modified to Phosphothreonine. Residue His115 is the Pros-phosphohistidine intermediate of the active site. The residue at position 122 (Ser122) is a Phosphoserine.

Belongs to the NDK family. Homotetramer. Requires Mg(2+) as cofactor.

Its subcellular location is the cytoplasm. The catalysed reaction is a 2'-deoxyribonucleoside 5'-diphosphate + ATP = a 2'-deoxyribonucleoside 5'-triphosphate + ADP. The enzyme catalyses a ribonucleoside 5'-diphosphate + ATP = a ribonucleoside 5'-triphosphate + ADP. In terms of biological role, major role in the synthesis of nucleoside triphosphates other than ATP. The ATP gamma phosphate is transferred to the NDP beta phosphate via a ping-pong mechanism, using a phosphorylated active-site intermediate. The polypeptide is Nucleoside diphosphate kinase (Oceanobacillus iheyensis (strain DSM 14371 / CIP 107618 / JCM 11309 / KCTC 3954 / HTE831)).